A 248-amino-acid chain; its full sequence is Biosynthetic peptidoglycan transglycosylase (248 aa).

The chain crosses the membrane as a helical span at residues 20-42 (WLRWLMAAPLLFAAASVLQVLIL).

This sequence belongs to the glycosyltransferase 51 family.

It localises to the cell inner membrane. It carries out the reaction [GlcNAc-(1-&gt;4)-Mur2Ac(oyl-L-Ala-gamma-D-Glu-L-Lys-D-Ala-D-Ala)](n)-di-trans,octa-cis-undecaprenyl diphosphate + beta-D-GlcNAc-(1-&gt;4)-Mur2Ac(oyl-L-Ala-gamma-D-Glu-L-Lys-D-Ala-D-Ala)-di-trans,octa-cis-undecaprenyl diphosphate = [GlcNAc-(1-&gt;4)-Mur2Ac(oyl-L-Ala-gamma-D-Glu-L-Lys-D-Ala-D-Ala)](n+1)-di-trans,octa-cis-undecaprenyl diphosphate + di-trans,octa-cis-undecaprenyl diphosphate + H(+). Its pathway is cell wall biogenesis; peptidoglycan biosynthesis. Its function is as follows. Peptidoglycan polymerase that catalyzes glycan chain elongation from lipid-linked precursors. The chain is Biosynthetic peptidoglycan transglycosylase from Xanthomonas euvesicatoria pv. vesicatoria (strain 85-10) (Xanthomonas campestris pv. vesicatoria).